A 193-amino-acid chain; its full sequence is Putative histone H2B type 2-C (193 aa).

The span at 1-12 (MPEPAKFAPAPK) shows a compositional bias: low complexity. A disordered region spans residues 1–33 (MPEPAKFAPAPKKGSKKAVTKAQKKDGKKRKRS). Proline 2 is subject to N-acetylproline. An N6-(2-hydroxyisobutyryl)lysine; alternate modification is found at lysine 6. 2 positions are modified to N6-(beta-hydroxybutyryl)lysine; alternate: lysine 6 and lysine 12. Lysine 6, lysine 12, and lysine 13 each carry N6-acetyllysine; alternate. Position 6 is an N6-butyryllysine; alternate (lysine 6). Residues lysine 6, lysine 12, and lysine 13 each carry the N6-crotonyllysine; alternate modification. N6-lactoyllysine; alternate occurs at positions 6 and 12. A Glycyl lysine isopeptide (Lys-Gly) (interchain with G-Cter in SUMO2); alternate cross-link involves residue lysine 6. The residue at position 13 (lysine 13) is an N6-(2-hydroxyisobutyryl)lysine; alternate. The residue at position 15 (serine 15) is a Phosphoserine; by STK4/MST1. An N6-acetyllysine; alternate mark is found at lysine 16, lysine 17, lysine 21, and lysine 24. Lysine 16, lysine 17, lysine 21, and lysine 24 each carry N6-crotonyllysine; alternate. N6-lactoyllysine; alternate is present on residues lysine 16, lysine 17, lysine 21, and lysine 24. Lysine 17 and lysine 21 each carry N6-(beta-hydroxybutyryl)lysine; alternate. N6-glutaryllysine; alternate is present on lysine 17. An N6-(2-hydroxyisobutyryl)lysine; alternate mark is found at lysine 21 and lysine 24. The residue at position 21 (lysine 21) is an N6-butyryllysine; alternate. Residue lysine 21 forms a Glycyl lysine isopeptide (Lys-Gly) (interchain with G-Cter in SUMO2); alternate linkage. Lysine 25 is subject to N6-(2-hydroxyisobutyryl)lysine. An N6-(2-hydroxyisobutyryl)lysine; alternate modification is found at lysine 35. Lysine 35 carries the N6-(beta-hydroxybutyryl)lysine; alternate modification. Lysine 35 is modified (N6-crotonyllysine; alternate). Lysine 35 is subject to N6-glutaryllysine; alternate. Lysine 35 bears the N6-succinyllysine; alternate mark. Residue lysine 35 forms a Glycyl lysine isopeptide (Lys-Gly) (interchain with G-Cter in ubiquitin); alternate linkage. Serine 37 is subject to Phosphoserine; by AMPK. Lysine 44, lysine 47, and lysine 58 each carry N6-(2-hydroxyisobutyryl)lysine; alternate. Lysine 44 bears the N6-lactoyllysine; alternate mark. Residues lysine 44 and lysine 47 each carry the N6-glutaryllysine; alternate modification. An N6-methyllysine; alternate modification is found at lysine 47. Lysine 58 bears the N6,N6-dimethyllysine; alternate mark. Arginine 80 bears the Dimethylated arginine mark. N6-(2-hydroxyisobutyryl)lysine; alternate is present on lysine 86. Lysine 86 carries the post-translational modification N6-(beta-hydroxybutyryl)lysine; alternate. N6-acetyllysine; alternate is present on lysine 86. Lysine 86 carries the post-translational modification N6-lactoyllysine; alternate. An N6,N6,N6-trimethyllysine; alternate modification is found at lysine 86. 2 positions are modified to omega-N-methylarginine: arginine 87 and arginine 93. The tract at residues 111–136 (PCPRAPRRSPSTPAPSESLPGPGARS) is disordered.

The protein belongs to the histone H2B family. The nucleosome is a histone octamer containing two molecules each of H2A, H2B, H3 and H4 assembled in one H3-H4 heterotetramer and two H2A-H2B heterodimers. The octamer wraps approximately 147 bp of DNA. Post-translationally, phosphorylation at Ser-37 (H2BS36ph) by AMPK in response to stress promotes transcription. Phosphorylated on Ser-15 (H2BS14ph) by STK4/MST1 during apoptosis; which facilitates apoptotic chromatin condensation. Also phosphorylated on Ser-15 in response to DNA double strand breaks (DSBs), and in correlation with somatic hypermutation and immunoglobulin class-switch recombination. In terms of processing, crotonylation (Kcr) is specifically present in male germ cells and marks testis-specific genes in post-meiotic cells, including X-linked genes that escape sex chromosome inactivation in haploid cells. Crotonylation marks active promoters and enhancers and confers resistance to transcriptional repressors. It is also associated with post-meiotically activated genes on autosomes. Lactylated in macrophages by EP300/P300 by using lactoyl-CoA directly derived from endogenous or exogenous lactate, leading to stimulates gene transcription.

The protein localises to the nucleus. It is found in the chromosome. Core component of nucleosome. Nucleosomes wrap and compact DNA into chromatin, limiting DNA accessibility to the cellular machineries which require DNA as a template. Histones thereby play a central role in transcription regulation, DNA repair, DNA replication and chromosomal stability. DNA accessibility is regulated via a complex set of post-translational modifications of histones, also called histone code, and nucleosome remodeling. The sequence is that of Putative histone H2B type 2-C from Homo sapiens (Human).